The sequence spans 398 residues: Phosphoglycerate kinase (398 aa).

Residues 24–26, Arg39, 62–65, Arg121, and Arg154 each bind substrate; these read DFN and HFGR. Residues Lys205, Gly296, Glu327, and 354–357 contribute to the ATP site; that span reads GGDS.

Belongs to the phosphoglycerate kinase family. As to quaternary structure, monomer.

It is found in the cytoplasm. The enzyme catalyses (2R)-3-phosphoglycerate + ATP = (2R)-3-phospho-glyceroyl phosphate + ADP. It functions in the pathway carbohydrate degradation; glycolysis; pyruvate from D-glyceraldehyde 3-phosphate: step 2/5. The polypeptide is Phosphoglycerate kinase (Trichodesmium erythraeum (strain IMS101)).